We begin with the raw amino-acid sequence, 337 residues long: tRNA-dihydrouridine synthase B (337 aa).

FMN is bound by residues 19–21 and glutamine 73; that span reads PMA. The active-site Proton donor is cysteine 103. FMN contacts are provided by residues lysine 142, 203 to 205, and 227 to 228; these read NGD and GR.

Belongs to the Dus family. DusB subfamily. It depends on FMN as a cofactor.

It carries out the reaction a 5,6-dihydrouridine in tRNA + NAD(+) = a uridine in tRNA + NADH + H(+). It catalyses the reaction a 5,6-dihydrouridine in tRNA + NADP(+) = a uridine in tRNA + NADPH + H(+). Functionally, catalyzes the synthesis of 5,6-dihydrouridine (D), a modified base found in the D-loop of most tRNAs, via the reduction of the C5-C6 double bond in target uridines. The sequence is that of tRNA-dihydrouridine synthase B from Pseudomonas putida (strain ATCC 47054 / DSM 6125 / CFBP 8728 / NCIMB 11950 / KT2440).